A 105-amino-acid polypeptide reads, in one-letter code: Protein LITTLE ZIPPER 2 (105 aa).

Positions 1-20 (MCLTTSEPPFPDTDTPTMRS) are disordered. Positions 39–60 (NLTRRRRLLKEQKEMEMRNLKL) form a coiled coil.

As to quaternary structure, interacts with REV.

Its function is as follows. Competitive inhibitor of the HD-ZIPIII transcription factors in shoot apical meristem (SAM) development. Acts by forming non-functional heterodimers. Part of a negative feedback loop. Essential for proper functioning of stem cells in the SAM. This is Protein LITTLE ZIPPER 2 from Arabidopsis thaliana (Mouse-ear cress).